Consider the following 507-residue polypeptide: Maturase K (507 aa).

The protein belongs to the intron maturase 2 family. MatK subfamily.

It is found in the plastid. Its subcellular location is the chloroplast. In terms of biological role, usually encoded in the trnK tRNA gene intron. Probably assists in splicing its own and other chloroplast group II introns. The chain is Maturase K from Craterostigma plantagineum (Blue gem).